The sequence spans 644 residues: Cyclin-dependent kinase C-2 C (644 aa).

One can recognise a Protein kinase domain in the interval 105–389 (FQKLEKIGQG…ASSALNSEYF (285 aa)). Residues 111–119 (IGQGTYSSV) and K134 contribute to the ATP site. Y116 bears the Phosphotyrosine mark. Residue D229 is the Proton acceptor of the active site. T263 is modified (phosphothreonine). Residues 420–427 (RKRANLKL) carry the Nuclear localization signal motif. Basic and acidic residues predominate over residues 565–576 (SKLSRIGERHGS). A disordered region spans residues 565–591 (SKLSRIGERHGSLDGSGLDFSQREEDS).

The protein belongs to the protein kinase superfamily. CMGC Ser/Thr protein kinase family. CDC2/CDKX subfamily. Post-translationally, autophosphorylated. In terms of tissue distribution, expressed specifically in flowers and pollen.

The protein resides in the nucleus. This is Cyclin-dependent kinase C-2 C from Arabidopsis thaliana (Mouse-ear cress).